The primary structure comprises 388 residues: tRNA(Ile)-lysidine synthase (388 aa).

Position 51–56 (51–56 (SGGRDS)) interacts with ATP.

This sequence belongs to the tRNA(Ile)-lysidine synthase family.

It is found in the cytoplasm. It catalyses the reaction cytidine(34) in tRNA(Ile2) + L-lysine + ATP = lysidine(34) in tRNA(Ile2) + AMP + diphosphate + H(+). Ligates lysine onto the cytidine present at position 34 of the AUA codon-specific tRNA(Ile) that contains the anticodon CAU, in an ATP-dependent manner. Cytidine is converted to lysidine, thus changing the amino acid specificity of the tRNA from methionine to isoleucine. This Bifidobacterium longum subsp. infantis (strain ATCC 15697 / DSM 20088 / JCM 1222 / NCTC 11817 / S12) protein is tRNA(Ile)-lysidine synthase.